The chain runs to 144 residues: Austinoid biosynthesis clusters protein S (144 aa).

Belongs to the trt14 isomerase family. In terms of assembly, homodimer.

Its pathway is secondary metabolite biosynthesis; terpenoid biosynthesis. Functionally, part of the gene cluster B that mediates the biosynthesis of the fungal meroterpenoid acetoxydehydroaustin. The first step of the pathway is the synthesis of 3,5-dimethylorsellinic acid by the polyketide synthase ausA. 3,5-dimethylorsellinic acid is then prenylated by the polyprenyl transferase ausN. Further epoxidation by the FAD-dependent monooxygenase ausM and cyclization by the probable terpene cyclase ausL lead to the formation of protoaustinoid A. Protoaustinoid A is then oxidized to spiro-lactone preaustinoid A3 by the combined action of the FAD-binding monooxygenases ausB and ausC, and the dioxygenase ausE. Acid-catalyzed keto-rearrangement and ring contraction of the tetraketide portion of preaustinoid A3 by ausJ lead to the formation of preaustinoid A4. The aldo-keto reductase ausK, with the help of ausH, is involved in the next step by transforming preaustinoid A4 into isoaustinone which is in turn hydroxylated by the P450 monooxygenase ausI to form austinolide. The cytochrome P450 monooxygenase ausG then modifies austinolide to austinol. Austinol is further acetylated to austin by the O-acetyltransferase ausP, which spontaneously changes to dehydroaustin. The cytochrome P450 monooxygenase then converts dehydroaustin is into 7-dehydrodehydroaustin. The hydroxylation catalyzed by ausR permits the second O-acetyltransferase ausQ to add an additional acetyl group to the molecule, leading to the formation of acetoxydehydroaustin. Due to genetic rearrangements of the clusters and the subsequent loss of some enzymes, the end product of the Penicillium brasilianum austinoid biosynthesis clusters is acetoxydehydroaustin. AusS is necessary for austinoids production and may play a possible function as a regulator. This is Austinoid biosynthesis clusters protein S from Penicillium brasilianum.